We begin with the raw amino-acid sequence, 59 residues long: Protein ORF5a (59 aa).

The chain crosses the membrane as a helical; Signal-anchor for type III membrane protein span at residues 13-33 (VIYDCIAILALGCAITCLLLI).

Its subcellular location is the membrane. This is Protein ORF5a (GP5) from Equine arteritis virus (strain Bucyrus) (EAV).